The sequence spans 330 residues: MISFSSFYKQISDSSLQHWLETLPSILGQWQREHKHGSLPKWEKVLNKLHYPEADIIDFKTSVKIGSGDQLSDGERQKLENLLAIFKPWRKGPYSLHGIEIDTEWRSDWKWERVVPHISPLENRTVLDVGCGSGYHMWRMLGEGAKHVVGIDPSPLFMCQFEAVKRLAGNEQPIHFLPLGIEELPALDAFDTVFSMGVLYHRRSPIDHIFQLRDQLRVGGELVLETLVIDGDENTVLMPTDRYGKMNNVWFLPSVEMLMLWLKKCDFTDIRCVDVDVTSLAEQRSTPWMPNESLVDYLDPNDVSLTVEGYPAPKRATIIATKNQPNKDLI.

Carboxy-S-adenosyl-L-methionine is bound by residues Lys91, Trp105, Lys110, Gly130, Asp152–Ser154, Ile181–Glu182, Met196, Tyr200, and Arg315.

It belongs to the class I-like SAM-binding methyltransferase superfamily. CmoB family. Homotetramer.

The enzyme catalyses carboxy-S-adenosyl-L-methionine + 5-hydroxyuridine(34) in tRNA = 5-carboxymethoxyuridine(34) in tRNA + S-adenosyl-L-homocysteine + H(+). In terms of biological role, catalyzes carboxymethyl transfer from carboxy-S-adenosyl-L-methionine (Cx-SAM) to 5-hydroxyuridine (ho5U) to form 5-carboxymethoxyuridine (cmo5U) at position 34 in tRNAs. The chain is tRNA U34 carboxymethyltransferase from Shewanella halifaxensis (strain HAW-EB4).